The sequence spans 287 residues: 4-diphosphocytidyl-2-C-methyl-D-erythritol kinase (287 aa).

Residue K14 is part of the active site. An ATP-binding site is contributed by 98–108; that stretch reads PPGAGLGGGSS. Residue D140 is part of the active site.

It belongs to the GHMP kinase family. IspE subfamily.

It carries out the reaction 4-CDP-2-C-methyl-D-erythritol + ATP = 4-CDP-2-C-methyl-D-erythritol 2-phosphate + ADP + H(+). Its pathway is isoprenoid biosynthesis; isopentenyl diphosphate biosynthesis via DXP pathway; isopentenyl diphosphate from 1-deoxy-D-xylulose 5-phosphate: step 3/6. Its function is as follows. Catalyzes the phosphorylation of the position 2 hydroxy group of 4-diphosphocytidyl-2C-methyl-D-erythritol. The polypeptide is 4-diphosphocytidyl-2-C-methyl-D-erythritol kinase (Methylacidiphilum infernorum (isolate V4) (Methylokorus infernorum (strain V4))).